The following is a 317-amino-acid chain: sn-1-specific diacylglycerol lipase ABHD11 (317 aa).

A mitochondrion-targeting transit peptide spans 1–20; the sequence is MSNFAMSALCRVFTRGAPCG. Residues 69–304 form the AB hydrolase-1 domain; it reads PLVFLHGLFG…ASHWIHADKP (236 aa). Active-site charge relay system residues include Ser-142, Glu-238, and His-297.

Belongs to the AB hydrolase superfamily. Post-translationally, phosphorylated.

It is found in the mitochondrion. It localises to the mitochondrion matrix. The enzyme catalyses 1-octadecanoyl-2-(5Z,8Z,11Z,14Z-eicosatetraenoyl)-sn-glycerol + H2O = 2-(5Z,8Z,11Z,14Z-eicosatetraenoyl)-glycerol + octadecanoate + H(+). It carries out the reaction a 1,2-diacyl-sn-glycerol + H2O = a 2-acylglycerol + a fatty acid + H(+). It catalyses the reaction a 1,3-diacyl-sn-glycerol + H2O = a 1-acyl-sn-glycerol + a fatty acid + H(+). The catalysed reaction is 1-octadecanoyl-2-(9Z-octadecenoyl)-sn-glycerol + H2O = 2-(9Z-octadecenoyl)-glycerol + octadecanoate + H(+). The enzyme catalyses 1-octadecanoyl-2-(4Z,7Z,10Z,13Z,16Z,19Z-docosahexaenoyl)-sn-glycerol + H2O = 2-(4Z,7Z,10Z,13Z,16Z,19Z-docosahexaenoyl)-glycerol + octadecanoate + H(+). It carries out the reaction 1,2-didecanoylglycerol + H2O = decanoylglycerol + decanoate + H(+). Its function is as follows. Catalyzes the hydrolysis of diacylglycerol in vitro and may function as a key regulator in lipid metabolism, namely by regulating the intracellular levels of diacylglycerol. 1,2-diacyl-sn-glycerols are the preferred substrate over 1,3-diacyl-sn-glycerols. The enzyme hydrolyzes stearate in preference to palmitate from the sn-1 position of 1,2-diacyl-sn-glycerols. The sequence is that of sn-1-specific diacylglycerol lipase ABHD11 from Danio rerio (Zebrafish).